A 461-amino-acid polypeptide reads, in one-letter code: Kremen protein 2 (461 aa).

A signal peptide spans 1 to 24 (MGTPHLQGFLLLFPLLLRLHGASA). Over 25-363 (GSLHSPGLSE…SPKPGAAQAS (339 aa)) the chain is Extracellular. Residues 34-118 (ECFQVNGADY…YWRYCDIPTC (85 aa)) form the Kringle domain. Intrachain disulfides connect cysteine 35/cysteine 118, cysteine 59/cysteine 99, and cysteine 88/cysteine 113. The N-linked (GlcNAc...) asparagine glycan is linked to asparagine 48. Positions 120–214 (MPGYLGCFVD…DGRLGIYEVS (95 aa)) constitute a WSC domain. A disulfide bridge links cysteine 218 with cysteine 244. The region spanning 218 to 325 (CQGNWSAPQG…QGFALTYRGL (108 aa)) is the CUB domain. Residues asparagine 221, asparagine 243, and asparagine 350 are each glycosylated (N-linked (GlcNAc...) asparagine). A disordered region spans residues 329-357 (VEGRASPEDSTESLAGDPDGANASCSPKP). The helical transmembrane segment at 364–386 (IGARVFSTVTAFSVLLLLLLSLL) threads the bilayer. Residues 387–461 (RLLRRRSCLL…SSLRSLVSAL (75 aa)) lie on the Cytoplasmic side of the membrane. The disordered stretch occupies residues 429–452 (CPPGDSQAEGPAAGYRPLSASSQS).

Interacts with ERLEC1. Forms a ternary complex with DKK1 and LRP6.

The protein resides in the membrane. Its function is as follows. Receptor for Dickkopf proteins. Cooperates with DKK1/2 to inhibit Wnt/beta-catenin signaling by promoting the endocytosis of Wnt receptors LRP5 and LRP6. Plays a role in limb development; attenuates Wnt signaling in the developing limb to allow normal limb patterning and can also negatively regulate bone formation. This is Kremen protein 2 (Kremen2) from Mus musculus (Mouse).